A 315-amino-acid polypeptide reads, in one-letter code: Acetyl-coenzyme A carboxylase carboxyl transferase subunit alpha (315 aa).

One can recognise a CoA carboxyltransferase C-terminal domain in the interval 38 to 292 (RLQKKSNELT…KLRLKEDLAE (255 aa)).

Belongs to the AccA family. As to quaternary structure, acetyl-CoA carboxylase is a heterohexamer composed of biotin carboxyl carrier protein (AccB), biotin carboxylase (AccC) and two subunits each of ACCase subunit alpha (AccA) and ACCase subunit beta (AccD).

It is found in the cytoplasm. The catalysed reaction is N(6)-carboxybiotinyl-L-lysyl-[protein] + acetyl-CoA = N(6)-biotinyl-L-lysyl-[protein] + malonyl-CoA. It participates in lipid metabolism; malonyl-CoA biosynthesis; malonyl-CoA from acetyl-CoA: step 1/1. Its function is as follows. Component of the acetyl coenzyme A carboxylase (ACC) complex. First, biotin carboxylase catalyzes the carboxylation of biotin on its carrier protein (BCCP) and then the CO(2) group is transferred by the carboxyltransferase to acetyl-CoA to form malonyl-CoA. This Haemophilus influenzae (strain PittEE) protein is Acetyl-coenzyme A carboxylase carboxyl transferase subunit alpha.